A 247-amino-acid chain; its full sequence is MAAVQFAAAGVLTGLLALATLASCNTDGDILYKQRLAWEDPNNVLQSWDPTLANPCTWFHVTCNLNNSVIRVDLGKAGISGPLLPDLGALESLQYMELFGNSLNGSIPSTLGNLTDLISLDLWDNLLTGPIPTTLGSISTLRYLRLYENNLTGPIPPSFGNLTSLLELKLHRNSLSGSIPASLGNIKSLQFLKLNENMLTGTVPLEVLSLVVVGNLTELNIARNNLDGTVRSSGLRVTAVIQDMRIA.

Positions 1-24 (MAAVQFAAAGVLTGLLALATLASC) are cleaved as a signal peptide. Residues Asn66, Asn104, and Asn113 are each glycosylated (N-linked (GlcNAc...) asparagine). 6 LRR repeats span residues 90-114 (LESL…LGNL), 116-138 (DLIS…LGSI), 139-161 (STLR…SFGN), 162-186 (LTSL…LGNI), 188-210 (SLQF…VLSL), and 213-237 (VGNL…GLRV). N-linked (GlcNAc...) asparagine glycans are attached at residues Asn150 and Asn161. The N-linked (GlcNAc...) asparagine glycan is linked to Asn215.

Interacts with WAK17 isoform 1; the interaction is direct. As to quaternary structure, (Microbial infection) Interacts with G.zeae CFEM1; the interaction is direct. Interacts with G.zeae CFEMN1; the interaction is direct. Interacts with G.zeae CFEM5; the interaction is direct.

Contributes to activation of the hypersensitive response, a form of programmed cell death, upon fungal infection. May sense the presence of fungal material and relay the signal to WAK17 isoform 1. This is Disease resistance protein BAK6 from Zea mays (Maize).